Here is a 322-residue protein sequence, read N- to C-terminus: Myeloid-associated differentiation marker (322 aa).

A disordered region spans residues 1 to 25 (MPVTVTRTTITTTTTSSSGQGSPTI). A Phosphoserine modification is found at serine 22. 2 consecutive MARVEL domains span residues 31–163 (ALTQ…ARPG) and 168–319 (YMAT…HLVF). 8 consecutive transmembrane segments (helical) span residues 41–61 (LLQL…GAWT), 70–90 (FTWC…LCGL), 101–121 (FPIT…IIYP), 137–157 (AIAA…EVAW), 171–191 (TVPG…FAFI), 203–223 (LEWC…AILL), 239–259 (FLSG…VLWP), and 294–314 (LAVA…LVHS).

The protein belongs to the MAL family.

The protein resides in the membrane. The sequence is that of Myeloid-associated differentiation marker (MYADM) from Pongo abelii (Sumatran orangutan).